The sequence spans 148 residues: Prefoldin subunit 2 (148 aa).

Positions 87 to 114 form a coiled coil; the sequence is KDGLEEVVRKLYETLEKKKKDLTEFEAK. The segment covering 122 to 134 has biased composition (basic and acidic residues); it reads QEDNKEGGNKKEG. The tract at residues 122–148 is disordered; sequence QEDNKEGGNKKEGNAQGVLVGAASSSQ.

It belongs to the prefoldin subunit beta family. Heterohexamer of two PFD-alpha type and four PFD-beta type subunits forming prefoldin co-chaperone complex. Interacts with LSM8, a specific subunit of the LSM2-8 complex, which is a core component of the spliceosome.

It is found in the cytoplasm. Its subcellular location is the nucleus. Functionally, binds specifically to cytosolic chaperonin (c-CPN) and transfers target proteins to it. Binds to nascent polypeptide chain and promotes folding in an environment in which there are many competing pathways for nonnative proteins. Together with other chaperonins, contribute to the regulation of gene expression by modulating the spliceosome function on pre-mRNA splicing post-transcriptionally by acting as a co-chaperone of Hsp90 to control levels of LSM8. Required for microtubules (MTs) organization and dynamicity. Involved in the process leading to microtubules dissociation in response to gibberellic acid (GA) probably due to the DELLA proteins-mediated translocation of the prefoldin co-chaperone complex from the cytoplasm to the nucleus. The sequence is that of Prefoldin subunit 2 from Arabidopsis thaliana (Mouse-ear cress).